We begin with the raw amino-acid sequence, 222 residues long: 7-cyano-7-deazaguanine synthase (222 aa).

8–18 (LSGGLDSATCL) is an ATP binding site. Zn(2+) is bound by residues Cys187, Cys197, Cys200, and Cys203.

Belongs to the QueC family. Zn(2+) is required as a cofactor.

It catalyses the reaction 7-carboxy-7-deazaguanine + NH4(+) + ATP = 7-cyano-7-deazaguanine + ADP + phosphate + H2O + H(+). Its pathway is purine metabolism; 7-cyano-7-deazaguanine biosynthesis. Functionally, catalyzes the ATP-dependent conversion of 7-carboxy-7-deazaguanine (CDG) to 7-cyano-7-deazaguanine (preQ(0)). The polypeptide is 7-cyano-7-deazaguanine synthase (Alcanivorax borkumensis (strain ATCC 700651 / DSM 11573 / NCIMB 13689 / SK2)).